We begin with the raw amino-acid sequence, 188 residues long: Zinc finger protein 428 (188 aa).

The tract at residues 1–162 (MTETREPAET…EEEEEEGTYH (162 aa)) is disordered. Residues 40–61 (PDSEEEEDEEEEEEETTDDPEY) show a composition bias toward acidic residues. Low complexity predominate over residues 84-94 (RAAQPPAQPCQ). Position 108 is a phosphothreonine (Thr108). A compositionally biased stretch (low complexity) spans 116–129 (PATAPQEAPAPEGR). Residues 138–149 (PPRAGEGRPAGR) show a composition bias toward basic and acidic residues. A C2H2-type zinc finger spans residues 161-183 (YHCTECEDSFDNLGELHGHFMLH).

The chain is Zinc finger protein 428 (ZNF428) from Homo sapiens (Human).